The primary structure comprises 374 residues: Putative glutamate--cysteine ligase 2 (374 aa).

This sequence belongs to the glutamate--cysteine ligase type 2 family. YbdK subfamily.

The catalysed reaction is L-cysteine + L-glutamate + ATP = gamma-L-glutamyl-L-cysteine + ADP + phosphate + H(+). In terms of biological role, ATP-dependent carboxylate-amine ligase which exhibits weak glutamate--cysteine ligase activity. The sequence is that of Putative glutamate--cysteine ligase 2 from Leptothrix cholodnii (strain ATCC 51168 / LMG 8142 / SP-6) (Leptothrix discophora (strain SP-6)).